Here is a 442-residue protein sequence, read N- to C-terminus: Microfibrillar-associated protein 1 (442 aa).

2 disordered regions span residues 1 to 34 and 113 to 203; these read MSAPSALVKQPPIQSTAGACPSRNEKGRAVYGEG and EVVS…PRLK. Acidic residues-rich tracts occupy residues 134-148 and 181-198; these read DTSEEEEEEIDDEEI and ESELESEYEEYTDSEDEM.

This sequence belongs to the MFAP1 family. In terms of assembly, component of the spliceosome B complex. Interacts with PRPF38A (via N-terminal interaction domain). Widely expressed.

The protein localises to the nucleus. Its function is as follows. Involved in pre-mRNA splicing as a component of the spliceosome. The sequence is that of Microfibrillar-associated protein 1 from Gallus gallus (Chicken).